The sequence spans 198 residues: Nucleoid occlusion factor SlmA (198 aa).

The region spanning 9-70 (RNRREEILQA…SLIEFIEDSL (62 aa)) is the HTH tetR-type domain. Residues 33–52 (TTAKLAANVGVSEAALYRHF) constitute a DNA-binding region (H-T-H motif). Residues 119 to 144 (DRLQGRINQLYERIEVQLRQVLRERK) adopt a coiled-coil conformation.

The protein belongs to the nucleoid occlusion factor SlmA family. As to quaternary structure, homodimer. Interacts with FtsZ.

It localises to the cytoplasm. The protein localises to the nucleoid. Required for nucleoid occlusion (NO) phenomenon, which prevents Z-ring formation and cell division over the nucleoid. Acts as a DNA-associated cell division inhibitor that binds simultaneously chromosomal DNA and FtsZ, and disrupts the assembly of FtsZ polymers. SlmA-DNA-binding sequences (SBS) are dispersed on non-Ter regions of the chromosome, preventing FtsZ polymerization at these regions. This is Nucleoid occlusion factor SlmA from Sodalis glossinidius (strain morsitans).